A 176-amino-acid chain; its full sequence is Ribosome rescue factor SmrB (176 aa).

The 76-residue stretch at 93-168 folds into the Smr domain; sequence LDLHGYRQSE…GDAALLVLID (76 aa).

This sequence belongs to the SmrB family. As to quaternary structure, associates with collided ribosomes, but not with correctly translating polysomes.

Functionally, acts as a ribosome collision sensor. Detects stalled/collided disomes (pairs of ribosomes where the leading ribosome is stalled and a second ribosome has collided with it) and endonucleolytically cleaves mRNA at the 5' boundary of the stalled ribosome. Stalled/collided disomes form a new interface (primarily via the 30S subunits) that binds SmrB. Cleaved mRNA becomes available for tmRNA ligation, leading to ribosomal subunit dissociation and rescue of stalled ribosomes. The polypeptide is Ribosome rescue factor SmrB (Shewanella baltica (strain OS223)).